The chain runs to 32 residues: ATP synthase subunit O, mitochondrial (32 aa).

Belongs to the ATPase delta chain family. F-type ATPases have 2 components, CF(1) - the catalytic core - and CF(0) - the membrane proton channel. CF(1) has five subunits: alpha(3), beta(3), gamma(1), delta(1), epsilon(1). CF(0) has three main subunits: a, b and c.

The protein localises to the mitochondrion. Its subcellular location is the mitochondrion inner membrane. Its function is as follows. Mitochondrial membrane ATP synthase (F(1)F(0) ATP synthase or Complex V) produces ATP from ADP in the presence of a proton gradient across the membrane which is generated by electron transport complexes of the respiratory chain. F-type ATPases consist of two structural domains, F(1) - containing the extramembraneous catalytic core and F(0) - containing the membrane proton channel, linked together by a central stalk and a peripheral stalk. During catalysis, ATP synthesis in the catalytic domain of F(1) is coupled via a rotary mechanism of the central stalk subunits to proton translocation. Part of the complex F(0) domain and the peripheric stalk, which acts as a stator to hold the catalytic alpha(3)beta(3) subcomplex and subunit a/ATP6 static relative to the rotary elements. This Spinacia oleracea (Spinach) protein is ATP synthase subunit O, mitochondrial.